The sequence spans 87 residues: U3-theraphotoxin-Hhn1a 15 (87 aa).

Residues 1-24 (MVNMKASMFLTFAGLVLLLVVCYA) form the signal peptide. The propeptide occupies 25 to 52 (SESEEKEFPKEMLSSIFAVDNDFKQEER). 3 cysteine pairs are disulfide-bonded: Cys54–Cys67, Cys61–Cys72, and Cys66–Cys79.

The protein belongs to the neurotoxin 10 (Hwtx-1) family. 51 (Hntx-8) subfamily. Hntx-8 sub-subfamily. Expressed by the venom gland.

The protein localises to the secreted. In terms of biological role, ion channel inhibitor. The protein is U3-theraphotoxin-Hhn1a 15 of Cyriopagopus hainanus (Chinese bird spider).